Here is a 66-residue protein sequence, read N- to C-terminus: MSQPLTVDCPTCGAPVEWTAANLNRPFCSDRCKLIDLGAWAAEEHKIPVAPDAEDELFSEDLPPRH.

Residues Cys-9, Cys-12, Cys-28, and Cys-32 each contribute to the Zn(2+) site.

The protein belongs to the DNA gyrase inhibitor YacG family. Interacts with GyrB. Zn(2+) is required as a cofactor.

Inhibits all the catalytic activities of DNA gyrase by preventing its interaction with DNA. Acts by binding directly to the C-terminal domain of GyrB, which probably disrupts DNA binding by the gyrase. The chain is DNA gyrase inhibitor YacG from Pseudomonas fluorescens (strain SBW25).